The primary structure comprises 428 residues: Chaperone SurA (428 aa).

The first 13 residues, 1–13, serve as a signal peptide directing secretion; sequence MLGALLLSGAVHA. 2 consecutive PpiC domains span residues 164–265 and 276–375; these read SEEF…KLLE and RDEV…EVLG.

It is found in the periplasm. The catalysed reaction is [protein]-peptidylproline (omega=180) = [protein]-peptidylproline (omega=0). Chaperone involved in the correct folding and assembly of outer membrane proteins. Recognizes specific patterns of aromatic residues and the orientation of their side chains, which are found more frequently in integral outer membrane proteins. May act in both early periplasmic and late outer membrane-associated steps of protein maturation. The protein is Chaperone SurA of Pseudomonas savastanoi pv. phaseolicola (strain 1448A / Race 6) (Pseudomonas syringae pv. phaseolicola (strain 1448A / Race 6)).